Reading from the N-terminus, the 154-residue chain is Ribonuclease H (154 aa).

An RNase H type-1 domain is found at Glu3–Ala144. Residues Asp12, Glu50, Asp72, and Asp136 each contribute to the Mg(2+) site.

Belongs to the RNase H family. In terms of assembly, monomer. Mg(2+) serves as cofactor.

It localises to the cytoplasm. The enzyme catalyses Endonucleolytic cleavage to 5'-phosphomonoester.. Its function is as follows. Endonuclease that specifically degrades the RNA of RNA-DNA hybrids. The sequence is that of Ribonuclease H from Bradyrhizobium sp. (strain ORS 278).